Here is a 273-residue protein sequence, read N- to C-terminus: Putative pyruvate, phosphate dikinase regulatory protein (273 aa).

Position 153-160 (153-160 (GISRTSKT)) interacts with ADP.

Belongs to the pyruvate, phosphate/water dikinase regulatory protein family. PDRP subfamily.

It catalyses the reaction N(tele)-phospho-L-histidyl/L-threonyl-[pyruvate, phosphate dikinase] + ADP = N(tele)-phospho-L-histidyl/O-phospho-L-threonyl-[pyruvate, phosphate dikinase] + AMP + H(+). The enzyme catalyses N(tele)-phospho-L-histidyl/O-phospho-L-threonyl-[pyruvate, phosphate dikinase] + phosphate + H(+) = N(tele)-phospho-L-histidyl/L-threonyl-[pyruvate, phosphate dikinase] + diphosphate. Functionally, bifunctional serine/threonine kinase and phosphorylase involved in the regulation of the pyruvate, phosphate dikinase (PPDK) by catalyzing its phosphorylation/dephosphorylation. This is Putative pyruvate, phosphate dikinase regulatory protein from Rhizobium etli (strain ATCC 51251 / DSM 11541 / JCM 21823 / NBRC 15573 / CFN 42).